We begin with the raw amino-acid sequence, 1278 residues long: Alpha-glucan water dikinase 2 (1278 aa).

The first 23 residues, 1–23 (MATSKSQQFQLIEGMELQITVTG), serve as a signal peptide directing secretion. The active-site Tele-phosphohistidine intermediate is His886.

Belongs to the PEP-utilizing enzyme family. Homodimer. Mg(2+) serves as cofactor.

It catalyses the reaction [(1-&gt;4)-alpha-D-glucosyl](n) + n ATP + n H2O = [(1-&gt;4)-6-phospho-alpha-D-glucosyl](n) + n AMP + n phosphate + 2n H(+). Mediates the incorporation of phosphate into alpha-glucan, mostly at the C-6 position of glucose units. The polypeptide is Alpha-glucan water dikinase 2 (GWD2) (Arabidopsis thaliana (Mouse-ear cress)).